We begin with the raw amino-acid sequence, 379 residues long: Lipid-A-disaccharide synthase (379 aa).

It belongs to the LpxB family.

It catalyses the reaction a lipid X + a UDP-2-N,3-O-bis[(3R)-3-hydroxyacyl]-alpha-D-glucosamine = a lipid A disaccharide + UDP + H(+). It participates in bacterial outer membrane biogenesis; LPS lipid A biosynthesis. Condensation of UDP-2,3-diacylglucosamine and 2,3-diacylglucosamine-1-phosphate to form lipid A disaccharide, a precursor of lipid A, a phosphorylated glycolipid that anchors the lipopolysaccharide to the outer membrane of the cell. This is Lipid-A-disaccharide synthase from Aeromonas hydrophila subsp. hydrophila (strain ATCC 7966 / DSM 30187 / BCRC 13018 / CCUG 14551 / JCM 1027 / KCTC 2358 / NCIMB 9240 / NCTC 8049).